The following is a 221-amino-acid chain: Endo-1,4-beta-xylanase 11A (221 aa).

Residues 1–17 (MVSFTTLLTAVATAVSA) form the signal peptide. In terms of domain architecture, GH11 spans 28–218 (RGIQPGTGVH…SSGSAEIEVR (191 aa)). A glycan (N-linked (GlcNAc...) asparagine) is linked at Asn89. Glu113 acts as the Nucleophile in catalysis. The active-site Proton donor is Glu205.

This sequence belongs to the glycosyl hydrolase 11 (cellulase G) family.

It is found in the secreted. The catalysed reaction is Endohydrolysis of (1-&gt;4)-beta-D-xylosidic linkages in xylans.. It functions in the pathway glycan degradation; xylan degradation. Its activity is regulated as follows. Retains an activity of 52.5% in the presence of 5 mM SDS. Endo-1,4-beta-xylanase involved in the hydrolysis of xylan, a major structural heterogeneous polysaccharide found in plant biomass representing the second most abundant polysaccharide in the biosphere, after cellulose. Is an alkali-tolerant enzyme, exhibiting 50.6% of activity at pH 9.0, and 26.9% even at pH 10.0. In Humicola insolens (Soft-rot fungus), this protein is Endo-1,4-beta-xylanase 11A.